The primary structure comprises 64 residues: Putative neurotoxin-G (64 aa).

Positions 1 to 19 are cleaved as a signal peptide; sequence MFAMVTVTVLLLISSGIFC. Intrachain disulfides connect C25/C45, C32/C54, and C36/C56.

Expressed by the venom gland.

Its subcellular location is the secreted. In Lychas mucronatus (Chinese swimming scorpion), this protein is Putative neurotoxin-G.